We begin with the raw amino-acid sequence, 1605 residues long: MAAAGGGGPGGPGTGGKIRSRRYHLSSGRTPYSKSRQQQQGIISRVTDTVKSIVPGWLQKYFNKQEEEHDRVHSASEVIVNDTEARENNAEHHIYVVDDDDDEEGNSPTDGRVTPEPIINVDEEVPSTSQSAINNTDALTRPSLHRASLNFNIFDSPALNCQPSTSSAFPIGTSGFSLIKEIKDSTSQHDDDNISTTSGFSSRASDKDLAVSKNVSVPPLWSPEVDRSQSLSHNSSMTSKKPTFNLSAFGSLSPSLGNASILNRQLGDSPFYPGKTTYQGAAAVRSSRVRATPYQAPLRRQVKAKPAAHSQQCGVTSSAARRILQSLEKMSSPLADAKRIPSNSSLSHTPEKNVMDIPENPSKRKKVESPFPPVQRLVTPKSISVSANRSLYIKPSLTPSAVSNTNSRRIQPDKHNESRKNNLQTTSQSHSFSYPKFSTPASNGLSSGTGGGKMMREKGSHYSTKPANEELDGPVLPEIPLPLSTAALPSFQFSTLSGSATSPISVTKPANSTTCRLTSSSPSFTFSSPIVKSTESNAQSPGSSVDFTFSVPAAKASSATSDESKVSAVSRAAKTHAAVSSAKNTDDEQLGFCKPAKTLKEGSVLDMLRSPGFSSSPSLLTSASSLNRSTPTLSKTVGNTFSPANVSLGVGSKQAFGLWQCSACFHENMSSDSNCISCSALKPRPTETSKKLPASPPSSNTKSTVPLSSTPGLGDIFKKPAGMWDCDTCLVQNKAEVTKCVACETPKPGTGMKATLLIPSTTKSTNPATNTLAFASCSASIPNEEMFKKPMGSWECTVCHMQNKTEDNTCVGCKAEKPGTVKSVPTAAPSGLLGLLDQFKKPTGSWDCDVCLIQNKPEANKCIACESAKPGTKAELKGTFDTVKNSVSVAPLSSGQLGLLDQFKKSAGSWDCDVCLVENKPEATKCVACETSKPGTKAELKGFGTSTFSSGTAAPTFKFGVQSSDSTAELKSGASTSGFAKSIGNFKFGLASASTTTEETGKKSFTFGSSTTNEVSAGFKFGIAGSAQTKPDTLSQSTTSGFTFGSVSNTVSLAPTATSSGSTGLQVAAVIADSNLATTATLKSAEEKKAEAPTITPFSFGKTDQNKETASTSFVFGKKDEKTDSAPTGSSFAFGLKKDGEESKQFLFGKPEPTKVDGSAASAGFAFGVTNPTEKKDIEQPGKSVFAFGAQTSITDAGASKQPFSFLTNVSSTAASSSTCGVSSSVFGSVTQSSTPATPSNVFGSAISANAPAPSSGVFGNLTPSNAPAASSTLFGNVAPSSTPSGSSGLFGTAAASSTPATSTSLFGSAAKLSAPASSGGVFNSAAPAAPASTASSVFGSVASSTNTSANSANIFGSSGGAATAPGAFVFGQPASTASTVFGNSSESKSTFVFSGQENKPVTSASTSVTPFLFGAVSASTTPAAPGFNFGRTITSNTTGTSSSPFIFGAGASGSASSSITAQANPVPAFGQSSNPSTAPAFGSSTSVPVFPAGNSQQVPAFGSSSAQPPVFGQQATQPSFGSPAAPSAGSGFPFGNNANFNFNSTNSSGGVFTFNANSGSTTQPPPPGYMFNAAAPGFNMGTNGRTTPASTISTRKIKTARRRK.

Residues 1–16 (MAAAGGGGPGGPGTGG) are compositionally biased toward gly residues. Disordered regions lie at residues 1–44 (MAAA…GIIS) and 185–208 (STSQHDDDNISTTSGFSSRASDKD). Composition is skewed to polar residues over residues 27–44 (SGRTPYSKSRQQQQGIIS) and 194–203 (ISTTSGFSSR). Residues 249 to 250 (FG) form repeat 1. The 33 X 2 AA repeats of F-G stretch occupies residues 249 to 1556 (FGSLSPSLGN…NSSGGVFTFN (1308 aa)). 3 disordered regions span residues 332-373 (SPLA…PFPP), 397-476 (LTPS…GPVL), and 497-522 (SGSATSPISVTKPANSTTCRLTSSSP). Residues 397-409 (LTPSAVSNTNSRR) are compositionally biased toward polar residues. Positions 410-420 (IQPDKHNESRK) are enriched in basic and acidic residues. 2 stretches are compositionally biased toward polar residues: residues 421–432 (NNLQTTSQSHSF) and 497–517 (SGSATSPISVTKPANSTTCRL). The segment at 655 to 684 (AFGLWQCSACFHENMSSDSNCISCSALKPR) adopts a RanBP2-type 1 zinc-finger fold. The stretch at 656-657 (FG) is repeat 2. Residues cysteine 661, cysteine 664, cysteine 675, and cysteine 678 each contribute to the Zn(2+) site. Residues 686–711 (TETSKKLPASPPSSNTKSTVPLSSTP) form a disordered region. The segment covering 697 to 711 (PSSNTKSTVPLSSTP) has biased composition (polar residues). 4 consecutive RanBP2-type zinc fingers follow at residues 720 to 749 (PAGMWDCDTCLVQNKAEVTKCVACETPKPG), 790 to 819 (PMGSWECTVCHMQNKTEDNTCVGCKAEKPG), 842 to 871 (PTGSWDCDVCLIQNKPEANKCIACESAKPG), and 906 to 935 (SAGSWDCDVCLVENKPEATKCVACETSKPG). Zn(2+) is bound by residues cysteine 726, cysteine 729, cysteine 740, cysteine 743, cysteine 796, cysteine 799, cysteine 810, cysteine 813, cysteine 848, cysteine 851, cysteine 862, and cysteine 865. 31 consecutive repeat copies span residues 943 to 944 (FG), 959 to 960 (FG), 988 to 989 (FG), 1007 to 1008 (FG), 1021 to 1022 (FG), 1044 to 1045 (FG), 1100 to 1101 (FG), 1116 to 1117 (FG), 1134 to 1135 (FG), 1148 to 1149 (FG), 1167 to 1168 (FG), 1188 to 1189 (FG), 1227 to 1228 (FG), 1243 to 1244 (FG), 1259 to 1260 (FG), 1275 to 1276 (FG), 1291 to 1292 (FG), 1307 to 1308 (FG), 1339 to 1340 (FG), 1356 to 1357 (FG), 1371 to 1372 (FG), 1382 to 1383 (FG), 1414 to 1415 (FG), 1430 to 1431 (FG), 1448 to 1449 (FG), 1470 to 1471 (FG), 1482 to 1483 (FG), 1502 to 1503 (FG), 1512 to 1513 (FG), 1521 to 1522 (FG), and 1535 to 1536 (FG). Residues 1499–1518 (VPAFGSSSAQPPVFGQQATQ) show a composition bias toward polar residues. Positions 1499–1529 (VPAFGSSSAQPPVFGQQATQPSFGSPAAPSA) are disordered. Over residues 1519–1529 (PSFGSPAAPSA) the composition is skewed to low complexity. Positions 1556-1605 (NANSGSTTQPPPPGYMFNAAAPGFNMGTNGRTTPASTISTRKIKTARRRK) are disordered. The segment covering 1581–1595 (MGTNGRTTPASTIST) has biased composition (polar residues). Positions 1596–1605 (RKIKTARRRK) are enriched in basic residues.

This sequence belongs to the NUP153 family. As to quaternary structure, interacts (via C-terminal domain) with the nuclear receptor kpnb1; the interaction occurs in a RanGTP-dependent manner. Associates with the Importin alpha/Importin beta receptor. Requires Zn(2+) as cofactor. As to expression, egg (at protein level).

It localises to the nucleus membrane. The protein localises to the nucleus. The protein resides in the nuclear pore complex. Its function is as follows. Component of the nuclear pore complex (NPC), a complex required for the trafficking across the nuclear envelope. Functions as a scaffolding element in the nuclear phase of the NPC essential for normal nucleocytoplasmic transport of proteins and mRNAs. May be involved in the retention of unspliced mRNAs in the nucleus. Probably mediates tpr anchoring to the nuclear membrane at NPC. Possible DNA-binding subunit of the nuclear pore complex (NPC). The chain is Nuclear pore complex protein Nup153 (nup153) from Xenopus laevis (African clawed frog).